Reading from the N-terminus, the 140-residue chain is Neuropeptide CCHamide-2 (140 aa).

An N-terminal signal peptide occupies residues 1 to 22; sequence MAQMYLAVTIIALLAISHGVSA. C26 and C33 are oxidised to a cystine. H37 is modified (histidine amide). Positions 41 to 140 are excised as a propeptide; it reads SGDTSAMDQL…PDDGYYIESL (100 aa).

As to expression, expressed in corpora cardiaca (CC), corpora allata (CA), antennal lobe (AL) and gnathal ganglion (GNG) (at protein level). Expression detected in few animals (at protein level).

It localises to the secreted. Its function is as follows. Ligand for the CCHamide-2 receptor CCHa2-R. The sequence is that of Neuropeptide CCHamide-2 from Agrotis ipsilon (Black cutworm moth).